Reading from the N-terminus, the 1027-residue chain is Kinesin heavy chain isoform 5A (1027 aa).

A2 bears the N-acetylalanine mark. A Kinesin motor domain is found at 9-327; it reads SIKVLCRFRP…LMFGQRAKTI (319 aa). 86–93 is a binding site for ATP; sequence GQTSSGKT. The tract at residues 174–315 is microtubule-binding; sequence VSSPEEILDV…PSSYNDAETK (142 aa). The segment at 271–361 is necessary for interaction with ZFYVE27; sequence EGTKSYVPYR…KTKAQKETIA (91 aa). Positions 331-906 form a coiled coil; that stretch reads ASVNLELTAE…VDRIKEAVRY (576 aa). The tract at residues 353-1027 is interaction with BICD2; it reads TKAQKETIAK…FPLHQETAAS (675 aa). T397 bears the Phosphothreonine mark. The tract at residues 906-937 is disordered; that stretch reads YKSSGKRGHSAQIAKPVRPGHYPASSPTNPYG. A globular region spans residues 907-1027; that stretch reads KSSGKRGHSA…FPLHQETAAS (121 aa).

The protein belongs to the TRAFAC class myosin-kinesin ATPase superfamily. Kinesin family. Kinesin subfamily. Oligomer composed of two heavy chains and two light chains. Interacts with GRIP1. Interacts with FMR1 (via C-terminus); this interaction is increased in a mGluR-dependent manner. Interacts with BORCS5. Interacts with ZFYVE27. Interacts with VAPA, VAPB, SURF4, RAB11A (GDP-bound form), RAB11B (GDP-bound form) and RTN3 in a ZFYVE27-dependent manner. Interacts with BICD2. Interacts with DTNB.

It localises to the cytoplasm. The protein resides in the perinuclear region. The protein localises to the cytoskeleton. Its subcellular location is the perikaryon. The catalysed reaction is ATP + H2O + a kinesin associated with a microtubule at position (n) = ADP + phosphate a kinesin associated with a microtubule at position (n+1, toward the plus end).. Functionally, microtubule-dependent motor required for slow axonal transport of neurofilament proteins (NFH, NFM and NFL). Can induce formation of neurite-like membrane protrusions in non-neuronal cells in a ZFYVE27-dependent manner. The ZFYVE27-KIF5A complex contributes to the vesicular transport of VAPA, VAPB, SURF4, RAB11A, RAB11B and RTN3 proteins in neurons. Required for anterograde axonal transportation of MAPK8IP3/JIP3 which is essential for MAPK8IP3/JIP3 function in axon elongation. The chain is Kinesin heavy chain isoform 5A (Kif5a) from Mus musculus (Mouse).